The sequence spans 271 residues: MASAGSLDVPERGHQRPFLIGVSGGTASGKSTVCEKIMELLGQNEVDHRQRKVVILSQDRFYKVLTPEQKARALKGQYNFDHPDAFDNELMDRTLTQILDGQIVAVPMYDFITHSRLPETTTVYPADVVLFEGILAFYNQEIRDMFQLKLFVDTDSDVRLSRRVLRDMKRGRDLEQILTQYTTFVKPAFEEFSLPTKKYADVIIPRGVDNMVAINLIVQHIQDILNGDICKWQRGVQNGRSQKRTLPGQGDSGGLLLQGKRTHLESSSRPH.

An ATP-binding site is contributed by 24–32 (GGTASGKST). Substrate is bound by residues Asp-81, Tyr-109, His-114, Arg-163, Arg-172, and Gln-180. Asp-209 contacts ATP. The segment at 240–271 (RSQKRTLPGQGDSGGLLLQGKRTHLESSSRPH) is disordered. The span at 246–259 (LPGQGDSGGLLLQG) shows a compositional bias: low complexity. Residues 262 to 271 (THLESSSRPH) show a composition bias toward basic and acidic residues.

This sequence belongs to the uridine kinase family.

The enzyme catalyses uridine + ATP = UMP + ADP + H(+). The catalysed reaction is cytidine + ATP = CMP + ADP + H(+). It participates in pyrimidine metabolism; CTP biosynthesis via salvage pathway; CTP from cytidine: step 1/3. The protein operates within pyrimidine metabolism; UMP biosynthesis via salvage pathway; UMP from uridine: step 1/1. Phosphorylates uridine and cytidine to uridine monophosphate and cytidine monophosphate. Does not phosphorylate deoxyribonucleosides or purine ribonucleosides. Can use ATP or GTP as a phosphate donor. This chain is Uridine-cytidine kinase 1-B (uck1-b), found in Xenopus laevis (African clawed frog).